We begin with the raw amino-acid sequence, 113 residues long: Flagellar hook-basal body complex protein FliE (113 aa).

This sequence belongs to the FliE family.

It is found in the bacterial flagellum basal body. This Burkholderia mallei (strain NCTC 10247) protein is Flagellar hook-basal body complex protein FliE.